The sequence spans 216 residues: A-type ATP synthase subunit D (216 aa).

This sequence belongs to the V-ATPase D subunit family. In terms of assembly, has multiple subunits with at least A(3), B(3), C, D, E, F, H, I and proteolipid K(x). The N-terminus is blocked.

The protein localises to the cell membrane. Component of the A-type ATP synthase that produces ATP from ADP in the presence of a proton gradient across the membrane. The sequence is that of A-type ATP synthase subunit D from Sulfurisphaera tokodaii (strain DSM 16993 / JCM 10545 / NBRC 100140 / 7) (Sulfolobus tokodaii).